We begin with the raw amino-acid sequence, 601 residues long: Elongation factor 4 (601 aa).

The region spanning 7-189 (RNIRNFSIIA…AIVHRIPPPA (183 aa)) is the tr-type G domain. Residues 19–24 (DHGKST) and 136–139 (NKID) each bind GTP.

The protein belongs to the TRAFAC class translation factor GTPase superfamily. Classic translation factor GTPase family. LepA subfamily.

It localises to the cell inner membrane. It carries out the reaction GTP + H2O = GDP + phosphate + H(+). In terms of biological role, required for accurate and efficient protein synthesis under certain stress conditions. May act as a fidelity factor of the translation reaction, by catalyzing a one-codon backward translocation of tRNAs on improperly translocated ribosomes. Back-translocation proceeds from a post-translocation (POST) complex to a pre-translocation (PRE) complex, thus giving elongation factor G a second chance to translocate the tRNAs correctly. Binds to ribosomes in a GTP-dependent manner. This chain is Elongation factor 4, found in Xanthomonas oryzae pv. oryzae (strain MAFF 311018).